The chain runs to 457 residues: Cysteine--tRNA ligase (457 aa).

C28 lines the Zn(2+) pocket. A 'HIGH' region motif is present at residues 30–40 (PTVYDTAHIGN). Zn(2+) contacts are provided by C212, H237, and E241. The 'KMSKS' region motif lies at 270 to 274 (KMSKS). K273 provides a ligand contact to ATP.

This sequence belongs to the class-I aminoacyl-tRNA synthetase family. Monomer. The cofactor is Zn(2+).

Its subcellular location is the cytoplasm. The enzyme catalyses tRNA(Cys) + L-cysteine + ATP = L-cysteinyl-tRNA(Cys) + AMP + diphosphate. This is Cysteine--tRNA ligase from Wolbachia pipientis wMel.